We begin with the raw amino-acid sequence, 267 residues long: 4-hydroxy-tetrahydrodipicolinate reductase (267 aa).

Residues 8–13 (GAAGRM) and Asp34 contribute to the NAD(+) site. Arg35 provides a ligand contact to NADP(+). Residues 98–100 (GTT) and 122–125 (AANF) each bind NAD(+). Catalysis depends on His155, which acts as the Proton donor/acceptor. His156 provides a ligand contact to (S)-2,3,4,5-tetrahydrodipicolinate. The active-site Proton donor is Lys159. (S)-2,3,4,5-tetrahydrodipicolinate is bound at residue 165-166 (GT).

It belongs to the DapB family.

Its subcellular location is the cytoplasm. The catalysed reaction is (S)-2,3,4,5-tetrahydrodipicolinate + NAD(+) + H2O = (2S,4S)-4-hydroxy-2,3,4,5-tetrahydrodipicolinate + NADH + H(+). The enzyme catalyses (S)-2,3,4,5-tetrahydrodipicolinate + NADP(+) + H2O = (2S,4S)-4-hydroxy-2,3,4,5-tetrahydrodipicolinate + NADPH + H(+). It functions in the pathway amino-acid biosynthesis; L-lysine biosynthesis via DAP pathway; (S)-tetrahydrodipicolinate from L-aspartate: step 4/4. Catalyzes the conversion of 4-hydroxy-tetrahydrodipicolinate (HTPA) to tetrahydrodipicolinate. The chain is 4-hydroxy-tetrahydrodipicolinate reductase from Pseudomonas putida (strain ATCC 700007 / DSM 6899 / JCM 31910 / BCRC 17059 / LMG 24140 / F1).